Consider the following 383-residue polypeptide: tRNA-specific 2-thiouridylase MnmA (383 aa).

ATP contacts are provided by residues 9 to 16 (GMSGGVDS) and methionine 35. Residues 95–97 (NPD) form an interaction with target base in tRNA region. Catalysis depends on cysteine 100, which acts as the Nucleophile. A disulfide bridge connects residues cysteine 100 and cysteine 196. ATP is bound at residue glycine 124. An interaction with tRNA region spans residues 146 to 148 (KDQ). Cysteine 196 acts as the Cysteine persulfide intermediate in catalysis. Residues 308-309 (RY) form an interaction with tRNA region.

This sequence belongs to the MnmA/TRMU family.

It is found in the cytoplasm. It catalyses the reaction S-sulfanyl-L-cysteinyl-[protein] + uridine(34) in tRNA + AH2 + ATP = 2-thiouridine(34) in tRNA + L-cysteinyl-[protein] + A + AMP + diphosphate + H(+). Functionally, catalyzes the 2-thiolation of uridine at the wobble position (U34) of tRNA, leading to the formation of s(2)U34. The polypeptide is tRNA-specific 2-thiouridylase MnmA (Burkholderia lata (strain ATCC 17760 / DSM 23089 / LMG 22485 / NCIMB 9086 / R18194 / 383)).